The chain runs to 620 residues: Protein regulator of cytokinesis 1 (620 aa).

The segment at 1–303 (MRRSEVLAEE…IEAIRVELVQ (303 aa)) is required for the interaction with KIF4A. Residues 1 to 341 (MRRSEVLAEE…QLHDAEIVRL (341 aa)) form a dimerization region. Coiled coils occupy residues 96–133 (ILQL…ELCE), 211–304 (SLEN…LVQY), and 383–463 (GNLL…TEML). Residues 342-466 (KNYYEVHKEL…QTETEMLYGS (125 aa)) are spectrin-fold. The segment covering 446–459 (AKQERQLKNKKQTE) has biased composition (basic and acidic residues). A disordered region spans residues 446–488 (AKQERQLKNKKQTETEMLYGSAPRTPSKRRGLAPNTPGKARKL). Residues 467–620 (APRTPSKRRG…GILNSTNIQS (154 aa)) are unstructured, Arg/Lys rich. T470 and T481 each carry phosphothreonine; by CDK1. 3 positions are modified to phosphoserine: S513, R541, and S571. Residues 517-545 (RLPPSGSKPVAASTCSGKKTPRTGRHGAN) form a disordered region. Residue T578 is modified to Phosphothreonine. The disordered stretch occupies residues 600–620 (LSKASKSDATSGILNSTNIQS). Residues 606–620 (SDATSGILNSTNIQS) show a composition bias toward polar residues. At T616 the chain carries Phosphothreonine; by PLK1.

The protein belongs to the MAP65/ASE1 family. In terms of assembly, homodimer. Interacts with the C-terminal Rho-GAP domain and the basic region of RACGAP1. The interaction with RACGAP1 inhibits its GAP activity towards CDC42 in vitro, which may be required for maintaining normal spindle morphology. Interacts (via N-terminus) with the C-terminus of CENPE (via C-terminus); the interaction occurs during late mitosis. Interacts (via N-terminus) with KIF4A (via C-terminus); the interaction is required for the progression of mitosis. Interacts (via N-terminus) with KIF23 (via C-terminus); the interaction occurs during late mitosis. Interacts with KIF14 and KIF20A. Interacts with PLK1. Interacts with KIF20B. Interacts with CCDC66. In terms of processing, phosphorylation by CDK1 in early mitosis holds PRC1 in an inactive monomeric state, during the metaphase to anaphase transition, PRC1 is dephosphorylated, promoting interaction with KIF4A, which then translocates PRC1 along mitotic spindles to the plus ends of antiparallel interdigitating microtubules. Dephosphorylation also promotes MT-bundling activity by allowing dimerization. Phosphorylation by CDK1 prevents PLK1-binding: upon degradation of CDK1 at anaphase and dephosphorylation, it is then phosphorylated by PLK1, leading to cytokinesis. Overexpressed in bladder cancer cells.

The protein resides in the nucleus. It localises to the cytoplasm. It is found in the cytoskeleton. The protein localises to the spindle pole. Its subcellular location is the midbody. The protein resides in the chromosome. Its function is as follows. Key regulator of cytokinesis that cross-links antiparrallel microtubules at an average distance of 35 nM. Essential for controlling the spatiotemporal formation of the midzone and successful cytokinesis. Required for KIF14 localization to the central spindle and midbody. Required to recruit PLK1 to the spindle. Stimulates PLK1 phosphorylation of RACGAP1 to allow recruitment of ECT2 to the central spindle. Acts as an oncogene for promoting bladder cancer cells proliferation, apoptosis inhibition and carcinogenic progression. This Homo sapiens (Human) protein is Protein regulator of cytokinesis 1.